The chain runs to 572 residues: Receptor-transporting protein 5 (572 aa).

A 3CxxC-type zinc finger spans residues 52-148; that stretch reads SRLQCGHCPG…AYEGCCEACE (97 aa). Residues 544–560 traverse the membrane as a helical segment; it reads FWIWVSMTVCVFWLMCM.

It localises to the membrane. The chain is Receptor-transporting protein 5 (RTP5) from Homo sapiens (Human).